The primary structure comprises 157 residues: Small ribosomal subunit protein uS7 (157 aa).

The protein belongs to the universal ribosomal protein uS7 family. Part of the 30S ribosomal subunit. Contacts proteins S9 and S11.

One of the primary rRNA binding proteins, it binds directly to 16S rRNA where it nucleates assembly of the head domain of the 30S subunit. Is located at the subunit interface close to the decoding center, probably blocks exit of the E-site tRNA. In Caldicellulosiruptor bescii (strain ATCC BAA-1888 / DSM 6725 / KCTC 15123 / Z-1320) (Anaerocellum thermophilum), this protein is Small ribosomal subunit protein uS7.